A 201-amino-acid chain; its full sequence is Cytochrome c4 (201 aa).

An N-terminal signal peptide occupies residues 1 to 20 (MNKLLVSLLLTLGLTGLAHA). 8 residues coordinate heme c: C34, C37, H38, M77, C130, C133, H134, and M178.

Binds 2 heme c groups covalently per subunit.

It localises to the periplasm. Diheme, high potential cytochrome c believed to be an intermediate electron donor to terminal oxidation systems. The polypeptide is Cytochrome c4 (cc4) (Pseudomonas aeruginosa (strain ATCC 15692 / DSM 22644 / CIP 104116 / JCM 14847 / LMG 12228 / 1C / PRS 101 / PAO1)).